The chain runs to 230 residues: Octanoyltransferase (230 aa).

The region spanning 31 to 230 (PETPDELWIC…GDKLTRYLAP (200 aa)) is the BPL/LPL catalytic domain. Residues 70-77 (RGGQVTYH), 163-165 (ALG), and 176-178 (GVA) contribute to the substrate site. C194 (acyl-thioester intermediate) is an active-site residue.

The protein belongs to the LipB family.

The protein resides in the cytoplasm. It carries out the reaction octanoyl-[ACP] + L-lysyl-[protein] = N(6)-octanoyl-L-lysyl-[protein] + holo-[ACP] + H(+). The protein operates within protein modification; protein lipoylation via endogenous pathway; protein N(6)-(lipoyl)lysine from octanoyl-[acyl-carrier-protein]: step 1/2. Functionally, catalyzes the transfer of endogenously produced octanoic acid from octanoyl-acyl-carrier-protein onto the lipoyl domains of lipoate-dependent enzymes. Lipoyl-ACP can also act as a substrate although octanoyl-ACP is likely to be the physiological substrate. This is Octanoyltransferase from Albidiferax ferrireducens (strain ATCC BAA-621 / DSM 15236 / T118) (Rhodoferax ferrireducens).